The following is a 158-amino-acid chain: MDPNPRAALERQQLRLRERQKFFEDILQPETEFVFPLSHLHLESQRPPIGSISSMEVNVDTLEQVEFIDLADQDGADVFLPCEESSPAPQMSGVDDHPEELSLLVPTSDRTTSRTSSLSSDSSNLRSPNPSDGGGDTPLAQSDEEDGDDGGAEPGPCS.

Residues 79–158 form a disordered region; the sequence is FLPCEESSPA…DGGAEPGPCS (80 aa). The segment covering 106-131 has biased composition (low complexity); sequence PTSDRTTSRTSSLSSDSSNLRSPNPS. Phosphoserine occurs at positions 119 and 120. Thr-137 carries the post-translational modification Phosphothreonine. The residue at position 142 (Ser-142) is a Phosphoserine. Residues 142-151 are compositionally biased toward acidic residues; it reads SDEEDGDDGG.

This sequence belongs to the dysbindin family. In terms of assembly, monomer. Interacts with CSNK1D and CSNK1E.

Functionally, may modulate the activity of casein kinase-1. Inhibits CSNK1D autophosphorylation (in vitro). This Mus musculus (Mouse) protein is Dysbindin domain-containing protein 2 (Dbndd2).